The following is a 173-amino-acid chain: Photosystem I assembly protein Ycf3 (173 aa).

3 TPR repeats span residues 35–68, 72–105, and 120–153; these read AFVY…EENP, SYIL…NPKM, and GEKA…APNN.

It belongs to the Ycf3 family.

The protein localises to the cellular thylakoid membrane. Functionally, essential for the assembly of the photosystem I (PSI) complex. May act as a chaperone-like factor to guide the assembly of the PSI subunits. This is Photosystem I assembly protein Ycf3 from Synechocystis sp. (strain ATCC 27184 / PCC 6803 / Kazusa).